The following is a 293-amino-acid chain: 3-methyl-2-oxobutanoate hydroxymethyltransferase (293 aa).

Residues 1 to 29 (MTAAHDRSENQPGRPGGETTAPYGSAPRR) are disordered. Residues aspartate 73 and aspartate 112 each contribute to the Mg(2+) site. 3-methyl-2-oxobutanoate-binding positions include 73–74 (DS), aspartate 112, and lysine 142. Glutamate 144 lines the Mg(2+) pocket. The Proton acceptor role is filled by glutamate 210.

Belongs to the PanB family. In terms of assembly, homodecamer; pentamer of dimers. It depends on Mg(2+) as a cofactor.

Its subcellular location is the cytoplasm. The catalysed reaction is 3-methyl-2-oxobutanoate + (6R)-5,10-methylene-5,6,7,8-tetrahydrofolate + H2O = 2-dehydropantoate + (6S)-5,6,7,8-tetrahydrofolate. The protein operates within cofactor biosynthesis; (R)-pantothenate biosynthesis; (R)-pantoate from 3-methyl-2-oxobutanoate: step 1/2. In terms of biological role, catalyzes the reversible reaction in which hydroxymethyl group from 5,10-methylenetetrahydrofolate is transferred onto alpha-ketoisovalerate to form ketopantoate. This Saccharopolyspora erythraea (strain ATCC 11635 / DSM 40517 / JCM 4748 / NBRC 13426 / NCIMB 8594 / NRRL 2338) protein is 3-methyl-2-oxobutanoate hydroxymethyltransferase.